We begin with the raw amino-acid sequence, 53 residues long: Lectin alpha chain (53 aa).

Belongs to the leguminous lectin family. In terms of assembly, tetramer of two alpha and two beta chains.

In Lathyrus clymenum (Spanish vetchling), this protein is Lectin alpha chain.